Consider the following 348-residue polypeptide: Ketol-acid reductoisomerase (NADP(+)) (348 aa).

Residues 1–179 (MDVHYDADPA…GGTHAGVIET (179 aa)) enclose the KARI N-terminal Rossmann domain. NADP(+) is bound by residues 22–25 (YGSQ), arginine 45, serine 48, serine 50, and 80–83 (DQHQ). Histidine 105 is an active-site residue. Glycine 131 lines the NADP(+) pocket. The region spanning 180–325 (TFKDETETDL…QTLRGMMPWL (146 aa)) is the KARI C-terminal knotted domain. Mg(2+) is bound by residues aspartate 188, glutamate 192, glutamate 224, and glutamate 228. Residue serine 249 coordinates substrate. A disordered region spans residues 323–348 (PWLNGDETSADEDAPDAADTAPASSS). Residues 339-348 (AADTAPASSS) are compositionally biased toward low complexity.

This sequence belongs to the ketol-acid reductoisomerase family. Mg(2+) serves as cofactor.

It carries out the reaction (2R)-2,3-dihydroxy-3-methylbutanoate + NADP(+) = (2S)-2-acetolactate + NADPH + H(+). The enzyme catalyses (2R,3R)-2,3-dihydroxy-3-methylpentanoate + NADP(+) = (S)-2-ethyl-2-hydroxy-3-oxobutanoate + NADPH + H(+). It participates in amino-acid biosynthesis; L-isoleucine biosynthesis; L-isoleucine from 2-oxobutanoate: step 2/4. The protein operates within amino-acid biosynthesis; L-valine biosynthesis; L-valine from pyruvate: step 2/4. Functionally, involved in the biosynthesis of branched-chain amino acids (BCAA). Catalyzes an alkyl-migration followed by a ketol-acid reduction of (S)-2-acetolactate (S2AL) to yield (R)-2,3-dihydroxy-isovalerate. In the isomerase reaction, S2AL is rearranged via a Mg-dependent methyl migration to produce 3-hydroxy-3-methyl-2-ketobutyrate (HMKB). In the reductase reaction, this 2-ketoacid undergoes a metal-dependent reduction by NADPH to yield (R)-2,3-dihydroxy-isovalerate. The protein is Ketol-acid reductoisomerase (NADP(+)) of Salinibacter ruber (strain DSM 13855 / M31).